The primary structure comprises 429 residues: Enolase (429 aa).

Residue Gln162 participates in (2R)-2-phosphoglycerate binding. The active-site Proton donor is Glu204. Mg(2+)-binding residues include Asp241, Glu286, and Asp313. (2R)-2-phosphoglycerate contacts are provided by Lys338, Arg367, Ser368, and Lys389. The active-site Proton acceptor is Lys338.

Belongs to the enolase family. Requires Mg(2+) as cofactor.

It localises to the cytoplasm. The protein localises to the secreted. It is found in the cell surface. The catalysed reaction is (2R)-2-phosphoglycerate = phosphoenolpyruvate + H2O. It functions in the pathway carbohydrate degradation; glycolysis; pyruvate from D-glyceraldehyde 3-phosphate: step 4/5. Functionally, catalyzes the reversible conversion of 2-phosphoglycerate (2-PG) into phosphoenolpyruvate (PEP). It is essential for the degradation of carbohydrates via glycolysis. In Shouchella clausii (strain KSM-K16) (Alkalihalobacillus clausii), this protein is Enolase.